We begin with the raw amino-acid sequence, 1178 residues long: Dual specificity mitogen-activated protein kinase kinase hemipterous (1178 aa).

Disordered regions lie at residues 74 to 103 (SGSG…SSSS) and 115 to 148 (ATGT…GGGL). Composition is skewed to low complexity over residues 91–103 (ATPF…SSSS) and 115–128 (ATGT…PPTT). Positions 197–456 (LKHLGDLGNG…YPELLAQPFI (260 aa)) constitute a Protein kinase domain. Residues 203–211 (LGNGTSGNV) and Lys-226 each bind ATP. The Proton acceptor role is filled by Asp-320. Ser-348 is subject to Phosphoserine. A Phosphothreonine modification is found at Thr-352. Positions 522-648 (TYAGQSPTNP…DESPKKESMF (127 aa)) are disordered. Positions 523–543 (YAGQSPTNPQKTIKPTQIPSY) are enriched in polar residues. Residues 544 to 570 (QQQQSQFFMQSATQLPQTTTTTPTATT) are compositionally biased toward low complexity. The span at 574-593 (GGSGNGNGRGNGSGGSGNGS) shows a compositional bias: gly residues. Residues 594–608 (GSSSSASPLSPPSAG) show a composition bias toward low complexity. The span at 636–646 (KYNDESPKKES) shows a compositional bias: basic and acidic residues. Phosphoserine occurs at positions 646 and 662. Disordered regions lie at residues 715 to 783 (TTTP…LQPG), 797 to 851 (QNQL…STCS), 912 to 933 (GTSP…GNGN), 999 to 1026 (TSPV…VVNN), 1042 to 1108 (SSSS…NRGQ), and 1122 to 1178 (GQPP…TIDQ). The segment covering 724–734 (TENSQAYDSCD) has biased composition (polar residues). Composition is skewed to low complexity over residues 735–783 (SSSN…LQPG), 808–817 (RYQQQRQQPP), and 837–851 (THST…STCS). Over residues 912 to 928 (GTSPTLQSRSPEQQSDY) the composition is skewed to polar residues. Over residues 1042-1055 (SSSSNTSQSTSPTT) the composition is skewed to low complexity. A phosphoserine mark is found at Ser-1150 and Ser-1154. Residues 1168 to 1178 (PQRRIYRTIDQ) show a composition bias toward basic and acidic residues.

It belongs to the protein kinase superfamily. STE Ser/Thr protein kinase family. MAP kinase kinase subfamily. In terms of processing, MAPKK is itself dependent on Ser/Thr phosphorylation for activity catalyzed by MAP kinase kinase kinases. Post-translationally, weakly autophosphorylated.

It carries out the reaction L-seryl-[protein] + ATP = O-phospho-L-seryl-[protein] + ADP + H(+). It catalyses the reaction L-threonyl-[protein] + ATP = O-phospho-L-threonyl-[protein] + ADP + H(+). The catalysed reaction is L-tyrosyl-[protein] + ATP = O-phospho-L-tyrosyl-[protein] + ADP + H(+). In terms of biological role, required for the epithelial cell sheet movement called dorsal closure (DC), which allows establishment of the dorsal epidermis. Controls the expression in the dorsal epithelium edges of another dorsal closure gene, puckered (puc). Phosphorylates and activates the MAP kinase bsk; bsk signal transduction pathway mediates an immune response and morphogenesis. This is Dual specificity mitogen-activated protein kinase kinase hemipterous (hep) from Drosophila melanogaster (Fruit fly).